The primary structure comprises 179 residues: Large ribosomal subunit protein uL5 (179 aa).

It belongs to the universal ribosomal protein uL5 family. In terms of assembly, part of the 50S ribosomal subunit; part of the 5S rRNA/L5/L18/L25 subcomplex. Contacts the 5S rRNA and the P site tRNA. Forms a bridge to the 30S subunit in the 70S ribosome.

In terms of biological role, this is one of the proteins that bind and probably mediate the attachment of the 5S RNA into the large ribosomal subunit, where it forms part of the central protuberance. In the 70S ribosome it contacts protein S13 of the 30S subunit (bridge B1b), connecting the 2 subunits; this bridge is implicated in subunit movement. Contacts the P site tRNA; the 5S rRNA and some of its associated proteins might help stabilize positioning of ribosome-bound tRNAs. The polypeptide is Large ribosomal subunit protein uL5 (Synechococcus sp. (strain RCC307)).